The primary structure comprises 144 residues: Cytochrome c-type biogenesis protein CcmE (144 aa).

Topologically, residues 1-7 (MTRKQKR) are cytoplasmic. Residues 8–28 (LAVIGSGMGFLALAAALTFYA) traverse the membrane as a helical; Signal-anchor for type II membrane protein segment. The Periplasmic segment spans residues 29-144 (LGQQTSYFYM…LKKDGLWQEQ (116 aa)). The heme site is built by H122 and Y126.

It belongs to the CcmE/CycJ family.

It is found in the cell inner membrane. Heme chaperone required for the biogenesis of c-type cytochromes. Transiently binds heme delivered by CcmC and transfers the heme to apo-cytochromes in a process facilitated by CcmF and CcmH. This is Cytochrome c-type biogenesis protein CcmE from Chelativorans sp. (strain BNC1).